A 127-amino-acid chain; its full sequence is uncharacterized protein (127 aa).

Residues 69 to 94 are disordered; the sequence is GDGGSVPEKGKHGILGAQGQEHPGLN.

This is an uncharacterized protein from Homo sapiens (Human).